Consider the following 177-residue polypeptide: Large ribosomal subunit protein uL6 (177 aa).

Belongs to the universal ribosomal protein uL6 family. Part of the 50S ribosomal subunit.

In terms of biological role, this protein binds to the 23S rRNA, and is important in its secondary structure. It is located near the subunit interface in the base of the L7/L12 stalk, and near the tRNA binding site of the peptidyltransferase center. In Zymomonas mobilis subsp. mobilis (strain ATCC 31821 / ZM4 / CP4), this protein is Large ribosomal subunit protein uL6.